The following is a 558-amino-acid chain: Glucose-6-phosphate isomerase (558 aa).

Glu363 serves as the catalytic Proton donor. Active-site residues include His394 and Lys522.

Belongs to the GPI family.

Its subcellular location is the cytoplasm. It carries out the reaction alpha-D-glucose 6-phosphate = beta-D-fructose 6-phosphate. Its pathway is carbohydrate biosynthesis; gluconeogenesis. The protein operates within carbohydrate degradation; glycolysis; D-glyceraldehyde 3-phosphate and glycerone phosphate from D-glucose: step 2/4. Its function is as follows. Catalyzes the reversible isomerization of glucose-6-phosphate to fructose-6-phosphate. The chain is Glucose-6-phosphate isomerase from Blochmanniella floridana.